The chain runs to 351 residues: Thiamine-phosphate synthase (351 aa).

Residues 1–129 (MVEPYSQKEQ…AKACKQMRYQ (129 aa)) form a unknown region. Positions 65–85 (LRAARDTPGDPGTELTHPQEE) are disordered. Residues 130–351 (VYTLESNLMG…SQLNRIKPEL (222 aa)) form a thiamine-phosphate synthase region. Residues 177–181 (QYRDK) and N209 contribute to the 4-amino-2-methyl-5-(diphosphooxymethyl)pyrimidine site. D210 and D229 together coordinate Mg(2+). S248 serves as a coordination point for 4-amino-2-methyl-5-(diphosphooxymethyl)pyrimidine. 2-[(2R,5Z)-2-carboxy-4-methylthiazol-5(2H)-ylidene]ethyl phosphate is bound at residue 274–276 (TPT). K277 contributes to the 4-amino-2-methyl-5-(diphosphooxymethyl)pyrimidine binding site. G304 contributes to the 2-[(2R,5Z)-2-carboxy-4-methylthiazol-5(2H)-ylidene]ethyl phosphate binding site.

It belongs to the thiamine-phosphate synthase family. Requires Mg(2+) as cofactor.

It carries out the reaction 2-[(2R,5Z)-2-carboxy-4-methylthiazol-5(2H)-ylidene]ethyl phosphate + 4-amino-2-methyl-5-(diphosphooxymethyl)pyrimidine + 2 H(+) = thiamine phosphate + CO2 + diphosphate. It catalyses the reaction 2-(2-carboxy-4-methylthiazol-5-yl)ethyl phosphate + 4-amino-2-methyl-5-(diphosphooxymethyl)pyrimidine + 2 H(+) = thiamine phosphate + CO2 + diphosphate. The catalysed reaction is 4-methyl-5-(2-phosphooxyethyl)-thiazole + 4-amino-2-methyl-5-(diphosphooxymethyl)pyrimidine + H(+) = thiamine phosphate + diphosphate. It participates in cofactor biosynthesis; thiamine diphosphate biosynthesis; thiamine phosphate from 4-amino-2-methyl-5-diphosphomethylpyrimidine and 4-methyl-5-(2-phosphoethyl)-thiazole: step 1/1. Functionally, condenses 4-methyl-5-(beta-hydroxyethyl)thiazole monophosphate (THZ-P) and 2-methyl-4-amino-5-hydroxymethyl pyrimidine pyrophosphate (HMP-PP) to form thiamine monophosphate (TMP). The protein is Thiamine-phosphate synthase of Nostoc punctiforme (strain ATCC 29133 / PCC 73102).